The sequence spans 293 residues: Nucleotide-binding protein CKR_3143 (293 aa).

ATP is bound at residue 8–15 (GLSGAGKT). Residue 59 to 62 (DIRG) participates in GTP binding.

The protein belongs to the RapZ-like family.

Its function is as follows. Displays ATPase and GTPase activities. The protein is Nucleotide-binding protein CKR_3143 of Clostridium kluyveri (strain NBRC 12016).